A 359-amino-acid polypeptide reads, in one-letter code: Photosystem II protein D1 1 (359 aa).

Transmembrane regions (helical) follow at residues 29–46 (YVGW…AATT), 118–133 (HFLI…EWEL), and 142–156 (WICV…AASA). H118 serves as a coordination point for chlorophyll a. Residue Y126 participates in pheophytin a binding. 2 residues coordinate [CaMn4O5] cluster: D170 and E189. The chain crosses the membrane as a helical span at residues 197–218 (FHMMGVAGVFGGSLFSAMHGSL). H198 provides a ligand contact to chlorophyll a. Residues H215 and 264–265 (SF) each bind a quinone. Residue H215 coordinates Fe cation. H272 provides a ligand contact to Fe cation. A helical membrane pass occupies residues 274 to 288 (FLAAWPVVGIWFTAL). [CaMn4O5] cluster-binding residues include H332, E333, D342, and A344. Positions 345–359 (AAESTPVALQAPAIG) are excised as a propeptide.

It belongs to the reaction center PufL/M/PsbA/D family. PSII is composed of 1 copy each of membrane proteins PsbA, PsbB, PsbC, PsbD, PsbE, PsbF, PsbH, PsbI, PsbJ, PsbK, PsbL, PsbM, PsbT, PsbX, PsbY, PsbZ, Psb30/Ycf12, peripheral proteins PsbO, CyanoQ (PsbQ), PsbU, PsbV and a large number of cofactors. It forms dimeric complexes. Requires The D1/D2 heterodimer binds P680, chlorophylls that are the primary electron donor of PSII, and subsequent electron acceptors. It shares a non-heme iron and each subunit binds pheophytin, quinone, additional chlorophylls, carotenoids and lipids. D1 provides most of the ligands for the Mn4-Ca-O5 cluster of the oxygen-evolving complex (OEC). There is also a Cl(-1) ion associated with D1 and D2, which is required for oxygen evolution. The PSII complex binds additional chlorophylls, carotenoids and specific lipids. as cofactor. In terms of processing, tyr-161 forms a radical intermediate that is referred to as redox-active TyrZ, YZ or Y-Z. C-terminally processed by CtpA; processing is essential to allow assembly of the oxygen-evolving complex and thus photosynthetic growth.

It localises to the cellular thylakoid membrane. It carries out the reaction 2 a plastoquinone + 4 hnu + 2 H2O = 2 a plastoquinol + O2. Its function is as follows. Photosystem II (PSII) is a light-driven water:plastoquinone oxidoreductase that uses light energy to abstract electrons from H(2)O, generating O(2) and a proton gradient subsequently used for ATP formation. It consists of a core antenna complex that captures photons, and an electron transfer chain that converts photonic excitation into a charge separation. The D1/D2 (PsbA/PsbD) reaction center heterodimer binds P680, the primary electron donor of PSII as well as several subsequent electron acceptors. This Synechococcus sp. (strain WH7803) protein is Photosystem II protein D1 1.